The chain runs to 750 residues: Photosystem I P700 chlorophyll a apoprotein A1 (750 aa).

Transmembrane regions (helical) follow at residues 70 to 93 (VFSA…FHGA), 156 to 179 (LYST…FHYH), 195 to 219 (LNHH…HVSL), 291 to 309 (TAHH…GHMY), 346 to 369 (WHAQ…HHMY), 385 to 411 (LSLF…IFMV), 433 to 455 (AIIS…LYIH), and 531 to 549 (FLVH…LILL). Residues Cys573 and Cys582 each coordinate [4Fe-4S] cluster. 2 helical membrane-spanning segments follow: residues 589-610 (HVFL…HFSW) and 664-686 (LSAY…MFLF). Residue His675 participates in chlorophyll a' binding. Chlorophyll a-binding residues include Met683 and Tyr691. Trp692 is a phylloquinone binding site. A helical transmembrane segment spans residues 724–744 (AVGVAHYLLGGIATTWAFFLA).

The protein belongs to the PsaA/PsaB family. As to quaternary structure, the PsaA/B heterodimer binds the P700 chlorophyll special pair and subsequent electron acceptors. PSI consists of a core antenna complex that captures photons, and an electron transfer chain that converts photonic excitation into a charge separation. The eukaryotic PSI reaction center is composed of at least 11 subunits. It depends on P700 is a chlorophyll a/chlorophyll a' dimer, A0 is one or more chlorophyll a, A1 is one or both phylloquinones and FX is a shared 4Fe-4S iron-sulfur center. as a cofactor.

The protein resides in the plastid. It localises to the chloroplast thylakoid membrane. The enzyme catalyses reduced [plastocyanin] + hnu + oxidized [2Fe-2S]-[ferredoxin] = oxidized [plastocyanin] + reduced [2Fe-2S]-[ferredoxin]. In terms of biological role, psaA and PsaB bind P700, the primary electron donor of photosystem I (PSI), as well as the electron acceptors A0, A1 and FX. PSI is a plastocyanin-ferredoxin oxidoreductase, converting photonic excitation into a charge separation, which transfers an electron from the donor P700 chlorophyll pair to the spectroscopically characterized acceptors A0, A1, FX, FA and FB in turn. Oxidized P700 is reduced on the lumenal side of the thylakoid membrane by plastocyanin. The polypeptide is Photosystem I P700 chlorophyll a apoprotein A1 (Marchantia polymorpha (Common liverwort)).